The chain runs to 109 residues: Aquaporin-2 (109 aa).

Residues 1–6 lie on the Cytoplasmic side of the membrane; sequence SVAFSR. Residues 7–27 traverse the membrane as a helical segment; the sequence is AVLAEFLATLIFVFFGLGSAL. Over 28 to 35 the chain is Extracellular; that stretch reads SWPQALPS. Residues 36–54 traverse the membrane as a helical segment; it reads VLQIALAFGLAIGTLVQAL. Residues 55–59 are Cytoplasmic-facing; the sequence is GHVSG. The discontinuously helical intramembrane region spans 60–69; the sequence is AHINPAVTVA. Positions 63 to 65 match the NPA 1 motif; that stretch reads NPA. Topologically, residues 70–80 are cytoplasmic; sequence CLVGCHVSFLR. Residues 81-102 traverse the membrane as a helical segment; it reads AAFYVAAQLLGAVAGAAILHEI. Residues 103 to 109 lie on the Extracellular side of the membrane; that stretch reads TPPDVRG.

It belongs to the MIP/aquaporin (TC 1.A.8) family. Homotetramer. In terms of processing, serine phosphorylation is necessary and sufficient for expression at the apical membrane. Endocytosis is not phosphorylation-dependent. Post-translationally, N-glycosylated.

The protein resides in the apical cell membrane. It localises to the basolateral cell membrane. The protein localises to the cell membrane. It is found in the cytoplasmic vesicle membrane. Its subcellular location is the golgi apparatus. The protein resides in the trans-Golgi network membrane. It catalyses the reaction H2O(in) = H2O(out). The enzyme catalyses glycerol(in) = glycerol(out). In terms of biological role, forms a water-specific channel that provides the plasma membranes of renal collecting duct with high permeability to water, thereby permitting water to move in the direction of an osmotic gradient. Plays an essential role in renal water homeostasis. Could also be permeable to glycerol. The sequence is that of Aquaporin-2 from Dasypus novemcinctus (Nine-banded armadillo).